The chain runs to 556 residues: MAETEKERLLKQLAQLKNERTSFESHWLDLSDFINPRGSRFLTSDVNRDDRRNTKIVDPTGSMAQRILSSGMMSGITSPARPWFKLATPDPDMMDYGPVKIWLEVVQRRMNEVFNKSNLYQSLPVMYASLGTFGTGAMAVMEDDQDVIRTMPFPIGSYYLANSPRGSVDTCIRQFSMTVRQMVQEFGLDNVSTSVKGMWENGTYETWVEVNHCITPNVNRDSGKMDSKNKPYRSVYFESGGDSDKLLRESGFDEFPILAPRWEVNGEDVYASSCPGMLALGQVKALQVEQKRKAQLIDKATNPPMVAPTSLKNQRVSLLPGDVTYLDVISGQDGFKPAYLVNPNTADLLADIQDTRQTINSAYFVDLFMMLQNINTRSMPVEAVIEMKEEKLLMLGPVLERLNDEALNPLIDRVFSIMARKNMLPEPPDVLQGMPLRIEYISVMAQAQKSIGLTSLSQTVGFIGQLAQFKPEALDKLDVDQAIDAFSEMSGVSPTVIVPQEQVQGIREERAKQAQAAQAMAMGQAAAQGAKTLSETQTSDPSALTAIANAAGAPQQ.

The segment at 527–556 (AQGAKTLSETQTSDPSALTAIANAAGAPQQ) is disordered. Polar residues predominate over residues 533-542 (LSETQTSDPS).

Belongs to the podoviridae head-to-tail connector protein family. Homododecamer.

It is found in the virion. Functionally, forms the portal vertex of the capsid. This portal plays critical roles in head assembly, genome packaging, neck/tail attachment, and genome ejection. The portal protein multimerizes as a single ring-shaped homododecamer arranged around a central channel. The polypeptide is Portal protein (Salmonella phage epsilon15).